A 480-amino-acid chain; its full sequence is Aspartyl/glutamyl-tRNA(Asn/Gln) amidotransferase subunit B (480 aa).

Belongs to the GatB/GatE family. GatB subfamily. In terms of assembly, heterotrimer of A, B and C subunits.

The enzyme catalyses L-glutamyl-tRNA(Gln) + L-glutamine + ATP + H2O = L-glutaminyl-tRNA(Gln) + L-glutamate + ADP + phosphate + H(+). The catalysed reaction is L-aspartyl-tRNA(Asn) + L-glutamine + ATP + H2O = L-asparaginyl-tRNA(Asn) + L-glutamate + ADP + phosphate + 2 H(+). Functionally, allows the formation of correctly charged Asn-tRNA(Asn) or Gln-tRNA(Gln) through the transamidation of misacylated Asp-tRNA(Asn) or Glu-tRNA(Gln) in organisms which lack either or both of asparaginyl-tRNA or glutaminyl-tRNA synthetases. The reaction takes place in the presence of glutamine and ATP through an activated phospho-Asp-tRNA(Asn) or phospho-Glu-tRNA(Gln). In Streptococcus pneumoniae (strain 70585), this protein is Aspartyl/glutamyl-tRNA(Asn/Gln) amidotransferase subunit B.